The chain runs to 428 residues: Immunoglobulin superfamily containing leucine-rich repeat protein (428 aa).

Residues 1–18 (MQELRLLCLVVLVGLAQA) form the signal peptide. Residues 19-50 (CPEPCECGEKYGFHIADCAYRDLQAVPSGFPA) form the LRRNT domain. Asn-51 carries an N-linked (GlcNAc...) asparagine glycan. 5 LRR repeats span residues 51–72 (NVTT…AFRE), 75–96 (RLQS…ALAS), 99–122 (QLKS…HSLS), 123–144 (ALQL…AFRS), and 147–168 (ALRS…TFAP). One can recognise an LRRCT domain in the interval 180 to 231 (NPFDCTCGIVWFKTWALTTAVSIPEQDNITCTSPHVLKGTRLNRLLPLPCSA). One can recognise an Ig-like domain in the interval 232-343 (PSVQLTYQPS…GSAESSVNVA (112 aa)). Cys-257 and Cys-327 form a disulfide bridge. An N-linked (GlcNAc...) asparagine glycan is attached at Asn-309.

Its subcellular location is the secreted. This chain is Immunoglobulin superfamily containing leucine-rich repeat protein (ISLR), found in Bos taurus (Bovine).